The primary structure comprises 436 residues: FAD-dependent monooxygenase pigN (436 aa).

FAD is bound by residues Glu40, Gly53, and Arg118. Arg200 is an active-site residue. FAD contacts are provided by Asp316 and Ala329.

It belongs to the paxM FAD-dependent monooxygenase family. FAD serves as cofactor.

It participates in secondary metabolite biosynthesis. Functionally, FAD-dependent monooxygenase; part of the gene cluster that mediates the biosynthesis of azaphilone pigments (MonAzPs), a complex mixture of compounds with a common azaphilone skeleton very widely used as food colorants. Within the pathway, pigN hydroxylates the benzaldehyde M7PKS-1 intermediate at C-4 to form the pyran ring. The first step of the pathway is performed by the nrPKS pigA that forms the hexaketide precursor from successive condensations of five malonyl-CoA units, with a simple acetyl-CoA starter unit. The role of esterase pigG is not clear, but it may play at most a supplementary role in the formation of the benzaldehyde produced by the pigA nrPKS. This very reactive benzaldehyde is intercepted by the pigC ketoreductase that to provide the first stable enzyme-free MonAzPs intermediate, 6-(4-hydroxy-2-oxopentyl)-3-methyl-2,4-dioxocyclohexane carbaldehyde, also known as M7PKS-1. The FAD-dependent monooxygenase pigN hydroxylates M7PKS-1 at C-4, which triggers the formation of the pyran ring. PigJ, pigK and pigD are involved in the acetylation of the pyran ring. PigJ and pigK form the two subunits of a dedicated fungal FAS that produces the side chain fatty acyl moiety of MonAzPs and pigD transfers the fatty acyl chain to the C-4 alcohol. PigM and pigO are involved in the elimination of the omega-1 alcohol. PigM acts as an O-acetyltransferase that synthesizes the putative O-11 acetyl intermediate whereas pigO eliminates acetic acid to yield an intermediate with a C10(11) double bond. The dehydration of the C-11 alcohol followed by the reduction of the C6(7) double bond by the NAD(P)H-dependent oxidoreductase pigE increases the electrophilicity of the C-5 ketone of the resulting acyl benzopyran. This in turn sets up the C-5 ketone for an intramolecular Knoevenagel aldol condensation with the C-20 enol of the side chain. This condensation affords the characteristic linear tricyclic carbon skeletons of the yellow pigments that serve as the common precursors for the classical yellow pigments monascin and ankaflavin, orange pigments rubopunctatin and monascorubrin, and red pigments ribropunctamine and monascorubramine. The FAD-dependent oxidoreductase pigF is especially invoved in the biosynthesis of orange and red pigments via desaturation of C6(7). The sequence is that of FAD-dependent monooxygenase pigN from Monascus ruber (Mold).